The chain runs to 364 residues: tRNA-specific 2-thiouridylase MnmA (364 aa).

Residues 12-19 (GMSGGVDS) and M38 each bind ATP. The interaction with target base in tRNA stretch occupies residues 98-100 (NPD). C103 functions as the Nucleophile in the catalytic mechanism. A disulfide bridge links C103 with C199. G127 is a binding site for ATP. The interval 149–151 (KDQ) is interaction with tRNA. Residue C199 is the Cysteine persulfide intermediate of the active site. Positions 307–308 (RY) are interaction with tRNA.

It belongs to the MnmA/TRMU family.

It is found in the cytoplasm. The enzyme catalyses S-sulfanyl-L-cysteinyl-[protein] + uridine(34) in tRNA + AH2 + ATP = 2-thiouridine(34) in tRNA + L-cysteinyl-[protein] + A + AMP + diphosphate + H(+). In terms of biological role, catalyzes the 2-thiolation of uridine at the wobble position (U34) of tRNA, leading to the formation of s(2)U34. The chain is tRNA-specific 2-thiouridylase MnmA from Shouchella clausii (strain KSM-K16) (Alkalihalobacillus clausii).